The sequence spans 212 residues: Thaumatin-like protein 1b (212 aa).

7 disulfides stabilise this stretch: Cys47/Cys57, Cys62/Cys69, Cys117/Cys200, Cys122/Cys183, Cys130/Cys146, Cys150/Cys159, and Cys160/Cys170.

It belongs to the thaumatin family.

The protein localises to the secreted. The chain is Thaumatin-like protein 1b from Malus domestica (Apple).